The chain runs to 220 residues: Orotate phosphoribosyltransferase (220 aa).

Lys26 lines the 5-phospho-alpha-D-ribose 1-diphosphate pocket. Phe34–Phe35 contacts orotate. Residues Tyr72 to Lys73, Arg101, Lys102, Lys105, His107, and Asp126 to Ser134 each bind 5-phospho-alpha-D-ribose 1-diphosphate. The orotate site is built by Thr130 and Arg158.

It belongs to the purine/pyrimidine phosphoribosyltransferase family. PyrE subfamily. As to quaternary structure, homodimer. It depends on Mg(2+) as a cofactor.

It carries out the reaction orotidine 5'-phosphate + diphosphate = orotate + 5-phospho-alpha-D-ribose 1-diphosphate. The protein operates within pyrimidine metabolism; UMP biosynthesis via de novo pathway; UMP from orotate: step 1/2. Its function is as follows. Catalyzes the transfer of a ribosyl phosphate group from 5-phosphoribose 1-diphosphate to orotate, leading to the formation of orotidine monophosphate (OMP). In Bordetella avium (strain 197N), this protein is Orotate phosphoribosyltransferase.